Here is a 532-residue protein sequence, read N- to C-terminus: MEMKQMKFLTHQAFFSSVRSGDLSQLQQLVDNLTGDELIDESSPCSAVAELMSVQNDAGETAVYISAAENLEDIFRYLIRFSSLETVKIRSKSDMNAFHVAAKRGHLGIVKELLRLWPELCRICDASNTSPLYAAAVQDHLEIVNAMLDVDPSCAMIVRKNGKTSLHTAGRYGLLRIVKALIEKDAAIVGVKDKKGQTALHMAVKGRSLEVVEEILQADYTILNERDRKGNTALHIATRKARPQITSLLLTFTAIEVNAINNQKETAMDLADKLQYSESALEINEALVEAGAKHGRFIGREDEARALKRAVSDIKHEVQSQLLQNEKTNRRVSGIAKELRKLHREAVQNTTNSITVVAVLFASIAFLAIFNLPGQYFTEGSHVGQANIAGRTGFRVFCLLNATSLFISLAVVVVQITLVAWDTRAQKKVVSVVNKLMWAACACTFGAFLAIAFAVVGKGNSWMAITITLLGAPILVGTLASMCYFVFRQRFRSGNDSQRRIRRGSSKSFSWSYSHHVSDFEDESDFEKIIAL.

ANK repeat units lie at residues 9–38, 58–89, 93–122, 127–156, 161–190, 195–224, and 229–259; these read LTHQ…GDEL, AGET…TVKI, SDMN…ELCR, SNTS…SCAM, NGKT…AIVG, KGQT…TILN, and KGNT…EVNA. A run of 4 helical transmembrane segments spans residues 354–374, 396–416, 436–456, and 467–487; these read ITVV…NLPG, VFCL…VVQI, LMWA…FAVV, and ITLL…YFVF.

Its subcellular location is the membrane. The sequence is that of Ankyrin repeat-containing protein At2g01680 from Arabidopsis thaliana (Mouse-ear cress).